We begin with the raw amino-acid sequence, 459 residues long: UDP-N-acetylmuramate--L-alanine ligase (459 aa).

118–124 lines the ATP pocket; the sequence is GTHGKTT.

This sequence belongs to the MurCDEF family.

The protein localises to the cytoplasm. It carries out the reaction UDP-N-acetyl-alpha-D-muramate + L-alanine + ATP = UDP-N-acetyl-alpha-D-muramoyl-L-alanine + ADP + phosphate + H(+). Its pathway is cell wall biogenesis; peptidoglycan biosynthesis. Functionally, cell wall formation. The chain is UDP-N-acetylmuramate--L-alanine ligase from Clostridium beijerinckii (strain ATCC 51743 / NCIMB 8052) (Clostridium acetobutylicum).